We begin with the raw amino-acid sequence, 126 residues long: Type II methyltransferase M.HgiGI (126 aa).

One can recognise an SAM-dependent MTase C5-type domain in the interval 1 to 126 (MKTIDLFAGC…ARLSKIHQQA (126 aa)). Cysteine 75 is an active-site residue.

The protein belongs to the class I-like SAM-binding methyltransferase superfamily. C5-methyltransferase family.

It catalyses the reaction a 2'-deoxycytidine in DNA + S-adenosyl-L-methionine = a 5-methyl-2'-deoxycytidine in DNA + S-adenosyl-L-homocysteine + H(+). In terms of biological role, a methylase, recognizes the double-stranded sequence 5'-GRCGYC-3', methylates C-? on both strands, and protects the DNA from cleavage by the HgiEI endonuclease. This is Type II methyltransferase M.HgiGI from Herpetosiphon aurantiacus (Herpetosiphon giganteus).